The chain runs to 500 residues: L-arabinose isomerase (500 aa).

Mn(2+) is bound by residues E306, E333, H350, and H450.

Belongs to the arabinose isomerase family. As to quaternary structure, homohexamer. Requires Mn(2+) as cofactor.

It carries out the reaction beta-L-arabinopyranose = L-ribulose. It functions in the pathway carbohydrate degradation; L-arabinose degradation via L-ribulose; D-xylulose 5-phosphate from L-arabinose (bacterial route): step 1/3. In terms of biological role, catalyzes the conversion of L-arabinose to L-ribulose. In Escherichia coli O139:H28 (strain E24377A / ETEC), this protein is L-arabinose isomerase.